An 813-amino-acid chain; its full sequence is Nuclear pore complex protein 5 (813 aa).

The protein belongs to the nucleoporin Nup84/Nup107 family. Part of the nuclear pore complex (NPC). May interact with mdf-1.

It localises to the nucleus. The protein resides in the nuclear pore complex. Its subcellular location is the chromosome. The protein localises to the centromere. It is found in the kinetochore. It localises to the nucleus membrane. Involved in kinetochore assembly and chromosome segregation during embryonic mitosis. Required for the localization of the NDC80 complex member him-10, the chromosomal passenger complex component air-2 and nuclear pore complex proteins npp-23 and npp-15 to kinetochores during metaphase. Required for npp-23 localization to the nuclear envelope during interphase. Recruits mdf-1, a component of the spindle assembly checkpoint, to the nuclear envelope. Appears dispensable for the assembly of the nuclear pore complex and for nuclear protein import. The protein is Nuclear pore complex protein 5 of Caenorhabditis elegans.